The sequence spans 932 residues: Myelin gene regulatory factor-like A (932 aa).

Low complexity-rich tracts occupy residues 1-19 (MDGY…QQHQ) and 33-48 (QQQQ…QQQQ). Disordered stretches follow at residues 1 to 63 (MDGY…ISNG), 152 to 256 (VNSP…LSSS), 269 to 328 (TNTQ…NENP), 540 to 568 (VTPP…SNNM), 582 to 601 (TMNI…LSQL), 613 to 660 (TQNH…NNNN), and 680 to 726 (NINN…CHWN). The segment covering 49–59 (PMNGSNNQLLG) has biased composition (polar residues). A coiled-coil region spans residues 127-154 (LDSSFLMLQQQLQDQQQQIAQFNSSVNS). Composition is skewed to low complexity over residues 152–249 (VNSP…ANNT) and 277–294 (PRSI…TNSP). The NDT80 DNA-binding region spans 286 to 546 (PNLSPTNSPI…ATQVTPPGDL (261 aa)). A compositionally biased stretch (polar residues) spans 311–328 (ENENSDPPSPMTQYNENP). Composition is skewed to low complexity over residues 615–660 (NHNN…NNNN) and 680–721 (NINN…NNNN). The region spanning 767-877 (SDLRIKYDLK…KQMDEMKLKL (111 aa)) is the Peptidase S74 domain. Positions 863-895 (TQELSKQMDEMKLKLITYESKLKNLKKKSKNQT) form a coiled coil. Residues 895–915 (TILLIIFMITFLLVALYMYKP) traverse the membrane as a helical segment.

It localises to the membrane. In terms of biological role, transcription factor which acts as a key regulator of pstA (prestalk-A) cells differentiation. Essential for ecmA-specific gene expression. In Dictyostelium discoideum (Social amoeba), this protein is Myelin gene regulatory factor-like A (mrfA).